A 67-amino-acid polypeptide reads, in one-letter code: UPF0434 protein Bcep1808_2639 (67 aa).

This sequence belongs to the UPF0434 family.

The polypeptide is UPF0434 protein Bcep1808_2639 (Burkholderia vietnamiensis (strain G4 / LMG 22486) (Burkholderia cepacia (strain R1808))).